Consider the following 490-residue polypeptide: Keratin, type II cytoskeletal 8 (490 aa).

Residues 1 to 27 (MSIRVTQKSYKMSTSGPRAFSSRSFTS) are compositionally biased toward polar residues. The disordered stretch occupies residues 1-48 (MSIRVTQKSYKMSTSGPRAFSSRSFTSGPGARISSSSFSRVGSSSSSF). Residues 1-96 (MSIRVTQKSY…DPNIQAVRTQ (96 aa)) form a head region. At serine 9 the chain carries Phosphoserine; by PKC/PRKCE. Lysine 11 participates in a covalent cross-link: Glycyl lysine isopeptide (Lys-Gly) (interchain with G-Cter in SUMO2). Phosphoserine occurs at positions 13, 15, 21, and 22. Arginine 23 carries the post-translational modification Omega-N-methylarginine. Phosphoserine; by PKC/PRKCE is present on serine 24. Threonine 26 is modified (phosphothreonine). Phosphoserine is present on serine 27. Arginine 32 carries the post-translational modification Omega-N-methylarginine. Residues serine 34, serine 37, and serine 39 each carry the phosphoserine modification. Residues 34–48 (SSSSFSRVGSSSSSF) show a composition bias toward low complexity. An Omega-N-methylarginine modification is found at arginine 40. 3 positions are modified to phosphoserine: serine 43, serine 44, and serine 47. Position 49 is an asymmetric dimethylarginine; alternate (arginine 49). Arginine 49 carries the omega-N-methylarginine; alternate modification. Serine 51 is subject to Phosphoserine. The residue at position 80 (serine 80) is a Phosphoserine; by MAPK. The segment at 97–132 (EKEQIKSLNNKFASFIDKVRFLEQQNKMLETKWSLL) is coil 1A. The 312-residue stretch at 97–408 (EKEQIKSLNN…KLLEGEESRL (312 aa)) folds into the IF rod domain. Lysine 107 bears the N6-malonyllysine mark. Glycyl lysine isopeptide (Lys-Gly) (interchain with G-Cter in SUMO2) cross-links involve residues lysine 128 and lysine 136. The tract at residues 133–149 (QQQKTSRSNMDNMFESY) is linker 1. Residues 150-241 (INNLRRQLEA…QIHEEEIREL (92 aa)) are coil 1B. Lysine 203 participates in a covalent cross-link: Glycyl lysine isopeptide (Lys-Gly) (interchain with G-Cter in SUMO1); alternate. A Glycyl lysine isopeptide (Lys-Gly) (interchain with G-Cter in SUMO2); alternate cross-link involves residue lysine 203. N6-acetyllysine is present on lysine 213. Positions 242 to 265 (QSQISDTSVVLSMDNSRSLDMDGI) are linker 12. Residues serine 259 and serine 280 each carry the phosphoserine modification. The interval 266–403 (IAEVRAQYED…ITTYRKLLEG (138 aa)) is coil 2. The segment at 267–387 (AEVRAQYEDI…REYQELMNVK (121 aa)) is necessary for interaction with PNN. A Glycyl lysine isopeptide (Lys-Gly) (interchain with G-Cter in SUMO2) cross-link involves residue lysine 291. Lysine 301 is covalently cross-linked (Glycyl lysine isopeptide (Lys-Gly) (interchain with G-Cter in SUMO2); alternate). At lysine 301 the chain carries N6-acetyllysine; alternate. Lysine 310 participates in a covalent cross-link: Glycyl lysine isopeptide (Lys-Gly) (interchain with G-Cter in SUMO2). Lysine 331 is covalently cross-linked (Glycyl lysine isopeptide (Lys-Gly) (interchain with G-Cter in SUMO2); alternate). Lysine 331 carries the N6-acetyllysine; alternate modification. Serine 336 carries the post-translational modification Phosphoserine. A Glycyl lysine isopeptide (Lys-Gly) (interchain with G-Cter in SUMO2) cross-link involves residue lysine 399. A tail region spans residues 404 to 490 (EESRLESGMQ…VSESSDVVSK (87 aa)). Phosphoserine occurs at positions 406, 410, 416, 423, 430, 432, and 438. A Glycyl lysine isopeptide (Lys-Gly) (interchain with G-Cter in SUMO1); alternate cross-link involves residue lysine 479. A Glycyl lysine isopeptide (Lys-Gly) (interchain with G-Cter in SUMO2); alternate cross-link involves residue lysine 479. 4 positions are modified to phosphoserine: serine 482, serine 484, serine 485, and serine 489.

It belongs to the intermediate filament family. In terms of assembly, heterotetramer of two type I and two type II keratins. Forms a heterodimer with KRT18. Associates with KRT20. Interacts with PLEC isoform 1C, when in a heterodimer with KRT18. Interacts with PNN. When associated with KRT19, interacts with DMD. Interacts with TCHP. Interacts with APEX1. Interacts with GPER1. Interacts with EPPK1. Interacts with PKP1 and PKP2. Post-translationally, phosphorylation on serine residues is enhanced during EGF stimulation and mitosis. Ser-80 phosphorylation plays an important role in keratin filament reorganization. In terms of processing, O-glycosylated. O-GlcNAcylation at multiple sites increases solubility, and decreases stability by inducing proteasomal degradation. O-glycosylated (O-GlcNAcylated), in a cell cycle-dependent manner. In terms of tissue distribution, expressed in abundance in the epithelia of colon, bladder, ileum, and stomach, with lower expression observed in earskin (at protein level). Also expressed in pancreas, liver, dudenum and jejunum.

The protein resides in the cytoplasm. The protein localises to the nucleus. It localises to the nucleoplasm. It is found in the nucleus matrix. In terms of biological role, together with KRT19, helps to link the contractile apparatus to dystrophin at the costameres of striated muscle. This is Keratin, type II cytoskeletal 8 (Krt8) from Mus musculus (Mouse).